Here is a 64-residue protein sequence, read N- to C-terminus: Sec-independent protein translocase protein TatA (64 aa).

The helical transmembrane segment at 10–30 (LVLILGIALIIFGPGKLPELG) threads the bilayer.

The protein belongs to the TatA/E family. In terms of assembly, forms a complex with TatC.

It localises to the cell membrane. In terms of biological role, part of the twin-arginine translocation (Tat) system that transports large folded proteins containing a characteristic twin-arginine motif in their signal peptide across membranes. TatA could form the protein-conducting channel of the Tat system. In Alkaliphilus oremlandii (strain OhILAs) (Clostridium oremlandii (strain OhILAs)), this protein is Sec-independent protein translocase protein TatA.